The following is a 270-amino-acid chain: HTH-type transcriptional activator AllS (270 aa).

The HTH lysR-type domain occupies 4 to 61; that stretch reads LDPETLRTFVSVAETGSFSRAAEKLYKTTATISYRIKLLEDNTGVALFSRTTRSVLLT. A DNA-binding region (H-T-H motif) is located at residues 21–40; sequence FSRAAEKLYKTTATISYRIK.

It belongs to the LysR transcriptional regulatory family.

Functionally, positive regulator essential for the expression of allD operon. Binds to the allD promoter. The chain is HTH-type transcriptional activator AllS (allS) from Klebsiella pneumoniae.